The sequence spans 121 residues: Large ribosomal subunit protein bL12 (121 aa).

The protein belongs to the bacterial ribosomal protein bL12 family. Homodimer. Part of the ribosomal stalk of the 50S ribosomal subunit. Forms a multimeric L10(L12)X complex, where L10 forms an elongated spine to which 2 to 4 L12 dimers bind in a sequential fashion. Binds GTP-bound translation factors.

Functionally, forms part of the ribosomal stalk which helps the ribosome interact with GTP-bound translation factors. Is thus essential for accurate translation. This is Large ribosomal subunit protein bL12 from Shigella sonnei (strain Ss046).